A 241-amino-acid chain; its full sequence is Ribonuclease PH (241 aa).

Phosphate contacts are provided by residues Arg-87 and 125–127 (GTR).

The protein belongs to the RNase PH family. Homohexameric ring arranged as a trimer of dimers.

It catalyses the reaction tRNA(n+1) + phosphate = tRNA(n) + a ribonucleoside 5'-diphosphate. Its function is as follows. Phosphorolytic 3'-5' exoribonuclease that plays an important role in tRNA 3'-end maturation. Removes nucleotide residues following the 3'-CCA terminus of tRNAs; can also add nucleotides to the ends of RNA molecules by using nucleoside diphosphates as substrates, but this may not be physiologically important. Probably plays a role in initiation of 16S rRNA degradation (leading to ribosome degradation) during starvation. This Dehalococcoides mccartyi (strain ATCC BAA-2100 / JCM 16839 / KCTC 5957 / BAV1) protein is Ribonuclease PH.